A 200-amino-acid polypeptide reads, in one-letter code: Large ribosomal subunit protein uL4 (200 aa).

The interval 42 to 65 (TRAQKTRSDVSGGGAKPWRQKGTG) is disordered.

Belongs to the universal ribosomal protein uL4 family. In terms of assembly, part of the 50S ribosomal subunit.

One of the primary rRNA binding proteins, this protein initially binds near the 5'-end of the 23S rRNA. It is important during the early stages of 50S assembly. It makes multiple contacts with different domains of the 23S rRNA in the assembled 50S subunit and ribosome. In terms of biological role, forms part of the polypeptide exit tunnel. This chain is Large ribosomal subunit protein uL4, found in Photobacterium profundum (strain SS9).